The chain runs to 547 residues: Trigger factor-like protein TIG, Chloroplastic (547 aa).

A chloroplast-targeting transit peptide spans 1-77; it reads MELCVISTTT…SHGGNFRLFA (77 aa). Residue alanine 78 is modified to N-acetylalanine. Positions 271–366 constitute a PPIase FKBP-type domain; sequence GDLAVVDISA…LFYRDLPTLD (96 aa).

This sequence belongs to the FKBP-type PPIase family. Tig subfamily.

The protein localises to the plastid. It is found in the chloroplast. The catalysed reaction is [protein]-peptidylproline (omega=180) = [protein]-peptidylproline (omega=0). Its function is as follows. Involved in protein export. Acts as a chaperone by maintaining the newly synthesized protein in an open conformation. Functions as a peptidyl-prolyl cis-trans isomerase. The polypeptide is Trigger factor-like protein TIG, Chloroplastic (TIG) (Arabidopsis thaliana (Mouse-ear cress)).